The following is a 473-amino-acid chain: Mannose-1-phosphate guanylyltransferase (473 aa).

It belongs to the mannose-6-phosphate isomerase type 2 family. In terms of assembly, homodimer.

It catalyses the reaction alpha-D-mannose 1-phosphate + GTP + H(+) = GDP-alpha-D-mannose + diphosphate. Its pathway is nucleotide-sugar biosynthesis; GDP-alpha-D-mannose biosynthesis; GDP-alpha-D-mannose from alpha-D-mannose 1-phosphate (GTP route): step 1/1. It participates in bacterial outer membrane biogenesis; LPS O-antigen biosynthesis. Functionally, involved in GDP-mannose biosynthesis which serves as the activated sugar nucleotide precursor for mannose residues in cell surface polysaccharides. This enzyme participates in synthesis of the LPS group C2 O antigen. This is Mannose-1-phosphate guanylyltransferase (rfbM) from Salmonella muenchen.